A 490-amino-acid polypeptide reads, in one-letter code: MSPKQEEYEVERIVDEKLDRNGAVKLYRIRWLNYSSRSDTWEPPENLSGCSAVLAEWKRRKRRLKGSNSDSDSPHHASNPHPNSRQKHQHQTSKSVPRSQRFSRELNVKKENKKVFSSQTTKRQSRKQSTALTTNDTSIILDDSLHTNSKKLGKTRNEVKEESQKRELVSNSIKEATSPKTSSILTKPRNPSKLDSYTHLSFYEKRELFRKKLREIEGPEVTLVNEVDDEPCPSLDFQFISQYRLTQGVIPPDPNFQSGCNCSSLGGCDLNNPSRCECLDDLDEPTHFAYDAQGRVRADTGAVIYECNSFCSCSMECPNRVVQRGRTLPLEIFKTKEKGWGVRSLRFAPAGTFITCYLGEVITSAEAAKRDKNYDDDGITYLFDLDMFDDASEYTVDAQNYGDVSRFFNHSCSPNIAIYSAVRNHGFRTIYDLAFFAIKDIQPLEELTFDYAGAKDFSPVQSQKSQQNRISKLRRQCKCGSANCRGWLFG.

Positions tyrosine 8–serine 69 constitute a Chromo domain. Disordered stretches follow at residues lysine 61–threonine 133 and lysine 150–asparagine 190. Basic and acidic residues predominate over residues phenylalanine 102–lysine 114. Residues valine 115–threonine 133 show a composition bias toward polar residues. Position 127 is an N6,N6,N6-trimethyllysine; alternate (lysine 127). Position 127 is an N6-methyllysine; alternate (lysine 127). Residues threonine 155–leucine 168 are compositionally biased toward basic and acidic residues. Residues valine 169–leucine 185 are compositionally biased toward polar residues. A Pre-SET domain is found at serine 258–glycine 325. Cysteine 260, cysteine 262, cysteine 268, cysteine 276, cysteine 278, cysteine 307, cysteine 311, cysteine 313, and cysteine 317 together coordinate Zn(2+). The SET domain maps to leucine 328–alanine 452. S-adenosyl-L-methionine contacts are provided by residues lysine 338 to tryptophan 340, tyrosine 381, arginine 406, and phenylalanine 407 to histidine 410. Cysteine 412 contributes to the Zn(2+) binding site. The autoregulatory loop stretch occupies residues glycine 453–lysine 472. Lysine 455 is subject to N6,N6,N6-trimethyllysine; by autocatalysis; alternate. The residue at position 455 (lysine 455) is an N6,N6-dimethyllysine; by autocatalysis; alternate. Lysine 455 bears the N6-methyllysine; by autocatalysis; alternate mark. Lysine 464 is modified (N6-methyllysine). One can recognise a Post-SET domain in the interval leucine 473–phenylalanine 489. Zn(2+)-binding residues include cysteine 477, cysteine 479, and cysteine 484. Cysteine 477–lysine 478 provides a ligand contact to S-adenosyl-L-methionine.

Belongs to the class V-like SAM-binding methyltransferase superfamily. Histone-lysine methyltransferase family. Suvar3-9 subfamily. As to quaternary structure, component of the Clr4 methyltransferase complex (ClrC) composed of at least clr4, rik1, pcu4, rbx1, raf1 and raf2. The cullin pcu4, rik1, raf1, raf2 and the ring-box protein rbx1 are components of an E3 ubiquitin ligase, whose activity is essential for heterochromatin assembly. Interacts directly with pcu4. Interacts with mlo3. In terms of processing, autocatalytic methylation of specific lysine residues in an internal loop (autoregulatory loop) promote a conformational switch that enhances the H3K9me activity of clr4.

It is found in the nucleus. The protein localises to the cytoplasm. The protein resides in the cytoskeleton. It localises to the microtubule organizing center. Its subcellular location is the spindle pole body. It is found in the chromosome. The catalysed reaction is L-lysyl(9)-[histone H3] + 3 S-adenosyl-L-methionine = N(6),N(6),N(6)-trimethyl-L-lysyl(9)-[histone H3] + 3 S-adenosyl-L-homocysteine + 3 H(+). It carries out the reaction N(6)-methyl-L-lysyl(9)-[histone H3] + S-adenosyl-L-methionine = N(6),N(6)-dimethyl-L-lysyl(9)-[histone H3] + S-adenosyl-L-homocysteine + H(+). It catalyses the reaction N(6),N(6)-dimethyl-L-lysyl(9)-[histone H3] + S-adenosyl-L-methionine = N(6),N(6),N(6)-trimethyl-L-lysyl(9)-[histone H3] + S-adenosyl-L-homocysteine + H(+). The enzyme catalyses L-lysyl-[protein] + S-adenosyl-L-methionine = N(6)-methyl-L-lysyl-[protein] + S-adenosyl-L-homocysteine + H(+). The catalysed reaction is N(6)-methyl-L-lysyl-[protein] + S-adenosyl-L-methionine = N(6),N(6)-dimethyl-L-lysyl-[protein] + S-adenosyl-L-homocysteine + H(+). It carries out the reaction N(6),N(6)-dimethyl-L-lysyl-[protein] + S-adenosyl-L-methionine = N(6),N(6),N(6)-trimethyl-L-lysyl-[protein] + S-adenosyl-L-homocysteine + H(+). It catalyses the reaction L-lysyl(9)-[histone H3] + S-adenosyl-L-methionine = N(6)-methyl-L-lysyl(9)-[histone H3] + S-adenosyl-L-homocysteine + H(+). Its activity is regulated as follows. An internal loop (autoregulatory loop) inhibits the catalytic activity of the enzyme by blocking the histone H3K9 substrate-binding pocket. Autocatalytic methylation of specific lysine residues in this loop promote a conformational switch that enhances the H3K9me activity of clr4. Its function is as follows. Histone methyltransferase which contributes to the establishment of heterochromatin by specifically methylating histone H3 to form H3K9me. Part of the Clr4 methyltransferase complex (ClrC). ClrC preferentially ubiquitylates H3K14 and ClrC-mediated H3 ubiquitination promotes clr4 methyltransferase activity. Clr4 functions as a reader and writer of H3K9 methylation. It sets the H3K9me mark and afterwards this H3K9me mark is recognized by the chromodomains of clr4 and swi6/HP1, which then recruit additional clr4 leading to the methylation of neighboring nucleosomes. H3K9me represents a specific tag for epigenetic transcriptional repression by recruiting swi6/HP1 to methylated histones which leads to transcriptional silencing within centromeric heterochromatin, telomeres, ribosomal DNA repeats, and the silent mating-type region. Clr4 methyltransferase activity promotes the assembly of a tripartite complex composed of ClrC and complexes involved in siRNA generation. Apart from H3K9, also methylates non-histone proteins such as mlo3. Interacts with mlo3 to promote the processing of centromeric and antisense RNAs. This is Histone-lysine N-methyltransferase, H3 lysine-9 specific (clr4) from Schizosaccharomyces pombe (strain 972 / ATCC 24843) (Fission yeast).